Consider the following 228-residue polypeptide: Phosphoglycolate phosphatase (228 aa).

D9 acts as the Nucleophile in catalysis. Residues D9 and D11 each contribute to the Mg(2+) site. Residue K151 participates in substrate binding. Mg(2+) is bound by residues D174 and D178.

The protein belongs to the archaeal SPP-like hydrolase family. Mg(2+) is required as a cofactor.

The enzyme catalyses 2-phosphoglycolate + H2O = glycolate + phosphate. Functionally, catalyzes the dephosphorylation of 2-phosphoglycolate. In Pyrobaculum islandicum (strain DSM 4184 / JCM 9189 / GEO3), this protein is Phosphoglycolate phosphatase.